Here is a 567-residue protein sequence, read N- to C-terminus: Signal transducer and activator of transcription b (567 aa).

Residues 449-548 (WYDGLVYGFC…LGGRNKPRIR (100 aa)) form the SH2 domain.

It belongs to the transcription factor STAT family. As to quaternary structure, may interact with sodium-dependent transporter snf-12; the interaction is probably direct.

Its subcellular location is the cytoplasm. The protein resides in the nucleus. It localises to the vesicle. In terms of biological role, carries out a dual function: signal transduction and activation of transcription. Required, in concert with transcription factor elt-3, for up-regulation of the vacuolar H(+)-ATPase and acceleration of lysosome maturation at molt. As part of the innate immune response to molting and injury of the adult epidermis, positively regulates the expression of epidermal antimicrobial peptides, such as nlp-29. Through positively modulating the expression of epidermal antimicrobial peptides, such as nlp-29, plays a role in resistance to fungal infection and in the response to physical wounding and phorbol ester PMA treatment. Functions cell autonomously in the epidermis, in concert with sodium-dependent transporter snf-12, probably acting at vesicular membranes, downstream of a p38 MAPK/pmk-1 pathway. The protein is Signal transducer and activator of transcription b of Caenorhabditis elegans.